The primary structure comprises 84 residues: Perlustrin (84 aa).

The IGFBP N-terminal domain occupies 1–82 (LSCASCENAA…LDFKGVCARV (82 aa)). 6 cysteine pairs are disulfide-bonded: Cys3-Cys28, Cys6-Cys30, Cys11-Cys31, Cys18-Cys34, Cys42-Cys55, and Cys49-Cys79.

As to expression, shell.

Binds human IGF1 and IGF2 and bovine insulin. The polypeptide is Perlustrin (Haliotis laevigata (Smooth Australian abalone)).